Here is a 921-residue protein sequence, read N- to C-terminus: Leucine--tRNA ligase (921 aa).

The 'HIGH' region motif lies at 41 to 52 (PYPSGSGLHVGH). The 'KMSKS' region motif lies at 695–699 (KMSKS). Lysine 698 provides a ligand contact to ATP.

Belongs to the class-I aminoacyl-tRNA synthetase family.

The protein resides in the cytoplasm. The catalysed reaction is tRNA(Leu) + L-leucine + ATP = L-leucyl-tRNA(Leu) + AMP + diphosphate. The protein is Leucine--tRNA ligase of Cytophaga hutchinsonii (strain ATCC 33406 / DSM 1761 / CIP 103989 / NBRC 15051 / NCIMB 9469 / D465).